Consider the following 396-residue polypeptide: ATP phosphoribosyltransferase regulatory subunit (396 aa).

The protein belongs to the class-II aminoacyl-tRNA synthetase family. HisZ subfamily. Heteromultimer composed of HisG and HisZ subunits.

The protein localises to the cytoplasm. It participates in amino-acid biosynthesis; L-histidine biosynthesis; L-histidine from 5-phospho-alpha-D-ribose 1-diphosphate: step 1/9. Required for the first step of histidine biosynthesis. May allow the feedback regulation of ATP phosphoribosyltransferase activity by histidine. The protein is ATP phosphoribosyltransferase regulatory subunit of Alkaliphilus metalliredigens (strain QYMF).